The following is a 425-amino-acid chain: Dihydroorotase (425 aa).

Positions 56 and 58 each coordinate Zn(2+). Substrate contacts are provided by residues 58–60 (HYR) and N90. The Zn(2+) site is built by D148, H175, and H228. N274 lines the substrate pocket. D301 serves as a coordination point for Zn(2+). Residue D301 is part of the active site. Residues H305 and 319–320 (FG) each bind substrate.

The protein belongs to the metallo-dependent hydrolases superfamily. DHOase family. Class I DHOase subfamily. Zn(2+) is required as a cofactor.

The catalysed reaction is (S)-dihydroorotate + H2O = N-carbamoyl-L-aspartate + H(+). It participates in pyrimidine metabolism; UMP biosynthesis via de novo pathway; (S)-dihydroorotate from bicarbonate: step 3/3. Its function is as follows. Catalyzes the reversible cyclization of carbamoyl aspartate to dihydroorotate. The sequence is that of Dihydroorotase from Lactobacillus helveticus (strain DPC 4571).